The sequence spans 119 residues: Small ribosomal subunit protein bS6 (119 aa).

Residues 96 to 119 (VTEPSPLARSQEKDEEEGGRTAEA) are disordered.

It belongs to the bacterial ribosomal protein bS6 family.

In terms of biological role, binds together with bS18 to 16S ribosomal RNA. The protein is Small ribosomal subunit protein bS6 of Alkalilimnicola ehrlichii (strain ATCC BAA-1101 / DSM 17681 / MLHE-1).